The chain runs to 594 residues: Glutamate decarboxylase 1 (594 aa).

A compositionally biased stretch (low complexity) spans 1–13; that stretch reads MASSTPSSSATSS. The interval 1-23 is disordered; sequence MASSTPSSSATSSNAGADPNTTN. Serine 78 carries the post-translational modification Phosphoserine. 190-192 contacts 4-aminobutanoate; sequence QLS. At lysine 405 the chain carries N6-(pyridoxal phosphate)lysine. 4-aminobutanoate is bound at residue arginine 567.

Belongs to the group II decarboxylase family. Homodimer. Pyridoxal 5'-phosphate is required as a cofactor.

It catalyses the reaction L-glutamate + H(+) = 4-aminobutanoate + CO2. In terms of biological role, catalyzes the synthesis of the inhibitory neurotransmitter gamma-aminobutyric acid (GABA) with pyridoxal 5'-phosphate as cofactor. The sequence is that of Glutamate decarboxylase 1 (GAD1) from Pan troglodytes (Chimpanzee).